Here is a 165-residue protein sequence, read N- to C-terminus: RxLR effector protein CRE12 (165 aa).

A signal peptide spans 1-23 (MRLAAFVLVAVAFAIIPDGRVSA). A RxLR-dEER motif is present at residues 40–59 (RLLRLNAVPQPVETGNQEER).

This sequence belongs to the RxLR effector family.

It localises to the secreted. The protein resides in the host cell. Functionally, effector that is involved in host plant infection. Contributes to virulence during the early infection stage, by inhibiting plant defense responses induced by both PAMP-triggered immunity (PTI) and effector-triggered immunity (ETI). This Phytophthora infestans (strain T30-4) (Potato late blight agent) protein is RxLR effector protein CRE12.